We begin with the raw amino-acid sequence, 357 residues long: Phenylalanine--tRNA ligase alpha subunit (357 aa).

A Mg(2+)-binding site is contributed by glutamate 257.

It belongs to the class-II aminoacyl-tRNA synthetase family. Phe-tRNA synthetase alpha subunit type 1 subfamily. As to quaternary structure, tetramer of two alpha and two beta subunits. Mg(2+) serves as cofactor.

Its subcellular location is the cytoplasm. It catalyses the reaction tRNA(Phe) + L-phenylalanine + ATP = L-phenylalanyl-tRNA(Phe) + AMP + diphosphate + H(+). The chain is Phenylalanine--tRNA ligase alpha subunit from Ruegeria pomeroyi (strain ATCC 700808 / DSM 15171 / DSS-3) (Silicibacter pomeroyi).